Reading from the N-terminus, the 118-residue chain is Vesicle-associated membrane protein 1 (118 aa).

The segment covering methionine 1–alanine 15 has biased composition (low complexity). The tract at residues methionine 1–glutamine 36 is disordered. Topologically, residues methionine 1–lysine 96 are cytoplasmic. In terms of domain architecture, v-SNARE coiled-coil homology spans arginine 33 to lysine 93. At serine 63 the chain carries Phosphoserine. A helical; Anchor for type IV membrane protein transmembrane segment spans residues methionine 97–phenylalanine 116. Topologically, residues phenylalanine 117–alanine 118 are vesicular.

Belongs to the synaptobrevin family. As to quaternary structure, interacts with VAPA and VAPB.

It is found in the cytoplasmic vesicle. It localises to the secretory vesicle. The protein localises to the synaptic vesicle membrane. Its subcellular location is the synapse. The protein resides in the synaptosome. It is found in the cytoplasmic vesicle membrane. In terms of biological role, involved in the targeting and/or fusion of transport vesicles to their target membrane. The polypeptide is Vesicle-associated membrane protein 1 (VAMP1) (Bos taurus (Bovine)).